Consider the following 790-residue polypeptide: Threonine--tRNA ligase 2, cytoplasmic (790 aa).

N-acetylalanine is present on alanine 2. A coiled-coil region spans residues 13 to 68 (SRLQRQEEDIRWLCAEVQRLRDEQLRGPERGQAEGPRLTREVAQLQAENRDLHQRL). The segment at 80 to 117 (RTEAGRAAAHEPPTQNQEKDTKKKRLKQSEPGREVKQP) is disordered. Basic and acidic residues predominate over residues 96–117 (QEKDTKKKRLKQSEPGREVKQP). The TGS domain maps to 148–210 (NVISVRVAGG…EGDSTVELLM (63 aa)). Serine 441 is modified (phosphoserine). The Nuclear localization signal signature appears at 774 to 780 (KLKNLKK).

Belongs to the class-II aminoacyl-tRNA synthetase family. As to quaternary structure, may be a component of the multisynthetase complex (MSC), a large multi-subunit complex which contains at least eight different aminoacyl-tRNA synthetases plus three auxillary subunits AIMP1, AIMP2 and EEF1E1. Interacts with the MSC components EPRS1, AIMP1, AIMP2 and KARS1. As to expression, ubiquitous (at protein level). Strongly expressed in muscle (at protein level). Moderately expressed in heart and liver (at protein level). Weakly expressed in stomach, kidney, testis, spleen, brain, fat and lung (at protein level).

Its subcellular location is the cytoplasm. The protein resides in the nucleus. The catalysed reaction is tRNA(Thr) + L-threonine + ATP = L-threonyl-tRNA(Thr) + AMP + diphosphate + H(+). Functionally, catalyzes the attachment of threonine to tRNA(Thr) in a two-step reaction: threonine is first activated by ATP to form Thr-AMP and then transferred to the acceptor end of tRNA(Thr). Also edits incorrectly charged tRNA(Thr) via its editing domain, at the post-transfer stage. This chain is Threonine--tRNA ligase 2, cytoplasmic (Tars3), found in Mus musculus (Mouse).